A 185-amino-acid chain; its full sequence is Ribonuclease M5 (185 aa).

The Toprim domain maps to 3-84 (KEVIVVEGRD…KHARISQSEG (82 aa)). Residues Glu9, Asp55, and Asp57 each coordinate Mg(2+).

Belongs to the ribonuclease M5 family. Mg(2+) is required as a cofactor.

The protein resides in the cytoplasm. It catalyses the reaction Endonucleolytic cleavage of RNA, removing 21 and 42 nucleotides, respectively, from the 5'- and 3'-termini of a 5S-rRNA precursor.. Its function is as follows. Required for correct processing of both the 5' and 3' ends of 5S rRNA precursor. Cleaves both sides of a double-stranded region yielding mature 5S rRNA in one step. This is Ribonuclease M5 from Clostridium acetobutylicum (strain ATCC 824 / DSM 792 / JCM 1419 / IAM 19013 / LMG 5710 / NBRC 13948 / NRRL B-527 / VKM B-1787 / 2291 / W).